The following is a 663-amino-acid chain: Drug sensory protein A (663 aa).

A run of 3 helical transmembrane segments spans residues 32-52, 165-185, and 199-219; these read LMAAATLVVSLLMSGLTFWAV, VFIPLQYQGKFLGVLAIGINP, and VTIAVFISIWVMVILGAVFNA. Residues 220–272 form the HAMP domain; the sequence is LTITQPIKELLLGVKNIAAGNFKQRITLPFGGELGELIVNFNEMAERLERYEA. Positions 281–351 constitute a PAS domain; the sequence is EKAKLDTLVS…QPLRELAADQ (71 aa). The Histidine kinase domain maps to 429 to 656; that stretch reads NVSHELRTPL…TFWFDLAVYQ (228 aa). Histidine 432 carries the phosphohistidine; by autocatalysis modification.

It is found in the cell membrane. The catalysed reaction is ATP + protein L-histidine = ADP + protein N-phospho-L-histidine.. This chain is Drug sensory protein A (dspA), found in Synechocystis sp. (strain ATCC 27184 / PCC 6803 / Kazusa).